The chain runs to 54 residues: MSKKLAKKRQPVKPVVAKEPARTAKNFGYEEMLSELEAIVADAETRLAEDEATA.

This is an uncharacterized protein from Escherichia coli (strain K12).